Reading from the N-terminus, the 310-residue chain is MTQLAQQEKKQTYNFNKLQKRLRRNVGNAITDFGMIEDGDKVMVCLSGGKDSYTLLDILLNLQQNAPIKFDIVAVNLDQKQPGFPEHVLPEYLESIGVDYKIVQENTYGIVKEKIPEGKTTCSLCSRLRRGILYRTATELGATKIALGHHRDDMLATLFLNMFYGGKMKSMPPKLISDDGKQIVIRPLAYCKEKDIEKYAIAKEFPIIPCNLCGSQPNLQRQVVKEMLNTWDRQYPGRLETMFSAMQNITLSHMCDPKLFDFKGIKHGQLIDGIEGDTAFDEEKITPMQFEDEDQTDFSNNEMINFKEVN.

The PP-loop motif signature appears at 47–52; that stretch reads SGGKDS. Cysteine 122, cysteine 125, and cysteine 213 together coordinate [4Fe-4S] cluster.

The protein belongs to the TtcA family. Homodimer. Mg(2+) serves as cofactor. [4Fe-4S] cluster is required as a cofactor.

The protein resides in the cytoplasm. It carries out the reaction cytidine(32) in tRNA + S-sulfanyl-L-cysteinyl-[cysteine desulfurase] + AH2 + ATP = 2-thiocytidine(32) in tRNA + L-cysteinyl-[cysteine desulfurase] + A + AMP + diphosphate + H(+). It participates in tRNA modification. Its function is as follows. Catalyzes the ATP-dependent 2-thiolation of cytidine in position 32 of tRNA, to form 2-thiocytidine (s(2)C32). The sulfur atoms are provided by the cysteine/cysteine desulfurase (IscS) system. The protein is tRNA-cytidine(32) 2-sulfurtransferase of Haemophilus influenzae (strain 86-028NP).